The following is a 1241-amino-acid chain: Sterol 3-beta-glucosyltransferase (1241 aa).

Residues 1–11 (MSGIESTEEPC) are compositionally biased toward acidic residues. Disordered regions lie at residues 1-97 (MSGI…KPSI) and 124-189 (DQQV…TLRK). The span at 25-34 (PEERQTRKDS) shows a compositional bias: basic and acidic residues. Over residues 136–155 (ESEDQQADESSDEQEDDDQD) the composition is skewed to acidic residues. One can recognise a GRAM 1 domain in the interval 220–267 (NKLKRTFDISDTDVFISDYPCWLMGDVLLQGHLYITKHHILFFAFLPK). A PH domain is found at 271 to 373 (SISKSGALTT…WVSSLKKHIF (103 aa)). The interval 499–556 (DDFSQEQESAESSKPVSDDEIVSADDNQELEEKQPQDNLANAEKENHDKVSRANSRRT) is disordered. Positions 516–527 (DDEIVSADDNQE) are enriched in acidic residues. Residues 540–549 (AEKENHDKVS) show a composition bias toward basic and acidic residues. In terms of domain architecture, GRAM 2 spans 609-675 (ERFRKHFSLT…SDIENVNKEK (67 aa)). The interval 720–741 (KGSTDSSPPNASEGSSDESCNL) is disordered. Residues 723 to 741 (TDSSPPNASEGSSDESCNL) show a composition bias toward polar residues. UDP-alpha-D-glucose-binding residues include serine 797, arginine 798, aspartate 800, asparagine 1071, valine 1098, histidine 1100, histidine 1113, serine 1116, glycine 1117, threonine 1118, aspartate 1137, and glutamine 1138.

It belongs to the glycosyltransferase 28 family.

The protein resides in the cytoplasm. It localises to the preautophagosomal structure membrane. It carries out the reaction a sterol + UDP-alpha-D-glucose = a sterol 3-beta-D-glucoside + UDP + H(+). The catalysed reaction is ergosterol + UDP-alpha-D-glucose = ergosteryl 3-beta-D-glucoside + UDP + H(+). In terms of biological role, sterol glycosyltransferase responsible for the glycosylation of ergosterol to form ergosterol-glucoside. Mediates autophagic degradation of peroxisomes (pexophagy). This Pichia angusta (Yeast) protein is Sterol 3-beta-glucosyltransferase.